The primary structure comprises 33 residues: Photosystem II reaction center protein Psb30 (33 aa).

Residues 5–25 (ILSQLIAIAVTLFLGPVVVIL) traverse the membrane as a helical segment.

It belongs to the Psb30/Ycf12 family. PSII is composed of 1 copy each of membrane proteins PsbA, PsbB, PsbC, PsbD, PsbE, PsbF, PsbH, PsbI, PsbJ, PsbK, PsbL, PsbM, PsbT, PsbX, PsbY, PsbZ, Psb30/Ycf12, peripheral proteins of the oxygen-evolving complex and a large number of cofactors. It forms dimeric complexes.

It is found in the plastid. The protein resides in the chloroplast thylakoid membrane. In terms of biological role, a core subunit of photosystem II (PSII), probably helps stabilize the reaction center. The protein is Photosystem II reaction center protein Psb30 of Oedogonium cardiacum (Filamentous green alga).